The chain runs to 276 residues: F420-dependent methylenetetrahydromethanopterin dehydrogenase (276 aa).

The segment at 253 to 276 (TVLRTPHGKEGKTLSKKDLLAKPE) is disordered. Positions 259–276 (HGKEGKTLSKKDLLAKPE) are enriched in basic and acidic residues.

Belongs to the MTD family. As to quaternary structure, found to be tightly associated with methyl-coenzyme M methylreductase.

The catalysed reaction is 5,10-methylenetetrahydromethanopterin + oxidized coenzyme F420-(gamma-L-Glu)(n) + 2 H(+) = 5,10-methenyl-5,6,7,8-tetrahydromethanopterin + reduced coenzyme F420-(gamma-L-Glu)(n). It participates in one-carbon metabolism; methanogenesis from CO(2); 5,10-methylene-5,6,7,8-tetrahydromethanopterin from 5,10-methenyl-5,6,7,8-tetrahydromethanopterin (coenzyme F420 route): step 1/1. Its activity is regulated as follows. Activity requires salt; 100 mM sodium or potassium salts of chloride, phosphate or sulfate are equally effective. Not inactivated by O(2). Inhibited by hydrogen-producing 5,10-methenyltetrahydromethanopterin hydrogenase which has a higher affinity for their shared substrate. Enzyme is O(2)-stable and strictly dependent on coenzyme F420. Functionally, catalyzes the reversible reduction of methenyl-H(4)MPT(+) to methylene-H(4)MPT. In Methanothermobacter marburgensis (strain ATCC BAA-927 / DSM 2133 / JCM 14651 / NBRC 100331 / OCM 82 / Marburg) (Methanobacterium thermoautotrophicum), this protein is F420-dependent methylenetetrahydromethanopterin dehydrogenase.